The primary structure comprises 420 residues: Ribulose bisphosphate carboxylase large chain (420 aa).

The substrate site is built by N103 and T153. The active-site Proton acceptor is K155. K157 contributes to the substrate binding site. Residues K181, D183, and E184 each contribute to the Mg(2+) site. K181 bears the N6-carboxylysine mark. H274 serves as the catalytic Proton acceptor. Substrate contacts are provided by R275, H307, and S359.

Belongs to the RuBisCO large chain family. Type I subfamily. As to quaternary structure, heterohexadecamer of 8 large chains and 8 small chains; disulfide-linked. The disulfide link is formed within the large subunit homodimers. The cofactor is Mg(2+). In terms of processing, the disulfide bond which can form in the large chain dimeric partners within the hexadecamer appears to be associated with oxidative stress and protein turnover.

The protein resides in the plastid. It is found in the chloroplast. It catalyses the reaction 2 (2R)-3-phosphoglycerate + 2 H(+) = D-ribulose 1,5-bisphosphate + CO2 + H2O. It carries out the reaction D-ribulose 1,5-bisphosphate + O2 = 2-phosphoglycolate + (2R)-3-phosphoglycerate + 2 H(+). RuBisCO catalyzes two reactions: the carboxylation of D-ribulose 1,5-bisphosphate, the primary event in carbon dioxide fixation, as well as the oxidative fragmentation of the pentose substrate in the photorespiration process. Both reactions occur simultaneously and in competition at the same active site. The chain is Ribulose bisphosphate carboxylase large chain from Anemia mexicana (Mexican fern).